Consider the following 302-residue polypeptide: uncharacterized protein (302 aa).

An S4 RNA-binding domain is found at 19–90; that stretch reads QWLFSVLKTA…GELDILFEDN (72 aa). Asp138 is a catalytic residue. The segment at 182–205 is disordered; the sequence is KGTINSPIGRDRSHPTRRRVSPGG.

The protein belongs to the pseudouridine synthase RluA family.

The enzyme catalyses a uridine in RNA = a pseudouridine in RNA. This is an uncharacterized protein from Bacillus subtilis (strain 168).